The sequence spans 1042 residues: MSWLRSSPLRQSFSKAGGGSGSGASSRGGNSTNGTVRAFDASECDPKACYDSFCIHWQQAFEIIQRSENNRGQSHDDVLGVVTHLDHMVTLLLVELHHCNKVGLPGAPAPPAPCLEHLLSENLLDKLYEWGVKTGRYANAVRLEQLKLYEQLVSHSRHQLLVHEPFLRPLLKILASSQNEIYPPDVEKRLVILLNQLCVVLMQNVHLLDLFFFSTAQQNGSGGHANFIIFSLLIPYVHQEGSLGHQARDALLLCMACPRRLDRGTYIATYSSICPVWFTRAGEGLYSRLPNQIDIKTIDWYRITTDDVTELQELTLFMNSLEFCNAVVQVAHSMIRQQLLDFLYQGFLVPVLGPAVLQTNVESQISAMAYLDLIVRSVTEPGLIQIVVKFLLDEEKFDGQRILDVLVERLNSNDTRLCMVSLSLFDTLLSLNCEDIMLELALKYLLNCQHVPISHRFKVNRVDPYSNAVEYFLNTSPDIMKKVNNVLNINNNNNNTSQASSMLGSGPSSMPQGGRNVSKTIGANWNHYGNNTGETLMANYQAYLLEARNRIVQCKHACDQWNNVYRYQKLSKLVNNSSSLSHSGNGTAGSEDVRTYKVQMIKNFLAEFTTAPDSAVDMAGDGDRSSLCQSPAGMFGTGHHASHLMATTSKQLDSLQSLGDSSGYESLNITNLGTGSEDGRRHEAWKVSSVKEETIVDLDLSEDLFAQGTVSLGPFLTAIWGKLQTFTSNCLYVNLHLTGLISHLAWFPLPLLHSILLRPDIPTTSDTPSFHQVLKILKQQIDAELPDCDESLEIVDVARSFLVDREFRLINMRKNAIESNPHSGKLLLPNGATGASGPVSMTSNLSQTTPMQLTPSSSYDPFKRNDTKRKSISNSFSSIFRRPGSSASSGLAQVFQFFTGGGSSSNSSSISHQSSSTPSPAGSQQYLSSNSSGVSSFMGSSRRESREAETQFVDHPSIGGPPSSMGPTSLTSTGSPHNSLEYSLVNINGSIVGGIGSERQRDLAVSAVVLDEWLKELAAITQEQCIIMISDQVSSQKPGKLS.

The segment covering 1-14 (MSWLRSSPLRQSFS) has biased composition (polar residues). 4 disordered regions span residues 1–31 (MSWL…GGNS), 494–514 (NNTS…PQGG), 821–866 (PHSG…KRND), and 905–977 (SNSS…GSPH). The segment covering 839–859 (VSMTSNLSQTTPMQLTPSSSY) has biased composition (polar residues). Composition is skewed to low complexity over residues 905 to 940 (SNSS…FMGS) and 956 to 976 (PSIG…TGSP).

Belongs to the FHIP family.

The protein is FHIP family protein AAEL005291 of Aedes aegypti (Yellowfever mosquito).